Reading from the N-terminus, the 501-residue chain is Ribose import ATP-binding protein RbsA (501 aa).

2 consecutive ABC transporter domains span residues 8-245 and 255-500; these read LKMV…VGRT and VKKG…VGIN. 40-47 provides a ligand contact to ATP; the sequence is GENGAGKS.

The protein belongs to the ABC transporter superfamily. Ribose importer (TC 3.A.1.2.1) family. The complex is composed of an ATP-binding protein (RbsA), two transmembrane proteins (RbsC) and a solute-binding protein (RbsB).

It is found in the cell membrane. It catalyses the reaction D-ribose(out) + ATP + H2O = D-ribose(in) + ADP + phosphate + H(+). Its function is as follows. Part of the ABC transporter complex RbsABC involved in ribose import. Responsible for energy coupling to the transport system. The protein is Ribose import ATP-binding protein RbsA of Clostridium perfringens (strain 13 / Type A).